Here is a 395-residue protein sequence, read N- to C-terminus: Probable isocitrate dehydrogenase [NAD] gamma 2, mitochondrial (395 aa).

The transit peptide at 1–25 (MLAAGSCSVRTILQPALLLGHSREV) directs the protein to the mitochondrion. Threonine 117 contributes to the citrate binding site. 3 residues coordinate substrate: arginine 133, arginine 164, and aspartate 251. Aspartate 251 contacts Mn(2+). Residue asparagine 321 participates in ADP binding.

Belongs to the isocitrate and isopropylmalate dehydrogenases family. Heterooligomer of subunits alpha (IDH3A), beta (IDH3B), and gamma (IDH3G) in the apparent ratio of 2:1:1. The heterodimer containing one IDH3A and one IDH3B subunit and the heterodimer containing one IDH3A and one IDH3G subunit assemble into a heterotetramer (which contains two subunits of IDH3A, one of IDH3B and one of IDH3G) and further into the heterooctamer. Requires Mg(2+) as cofactor. Mn(2+) is required as a cofactor.

Its subcellular location is the mitochondrion. Its activity is regulated as follows. The heterotetramer and the heterodimer composed of IDH3A and IDH3G subunits can be allosterically activated by citrate (CIT) or/and ADP, and the two activators can act independently or synergistically. The heterodimer composed of IDH3A and IDH3B subunits cannot be allosterically regulated and the allosteric regulation of the heterotetramer is through the IDH3G subunit and not the IDH3B subunit. The IDH3G subunit contains the allosteric site which consists of a CIT-binding site and an ADP-binding site, and the binding of CIT and ADP causes conformational changes at the allosteric site which are transmitted to the active site in the catalytic subunit (IDH3A) through a cascade of conformational changes at the heterodimer interface, leading to stabilization of the isocitrate-binding at the active site and thus activation of the enzyme. ATP can activate the heterotetramer and the heterodimer composed of IDH3A and IDH3G subunits at low concentrations but inhibits their activities at high concentrations, whereas ATP exhibits only inhibitory effect on the heterodimer composed of IDH3A and IDH3B subunits. Regulatory subunit which plays a role in the allosteric regulation of the enzyme catalyzing the decarboxylation of isocitrate (ICT) into alpha-ketoglutarate. The heterodimer composed of the alpha (IDH3A) and beta (IDH3B) subunits and the heterodimer composed of the alpha (IDH3A) and gamma (IDH3G) subunits, have considerable basal activity but the full activity of the heterotetramer (containing two subunits of IDH3A, one of IDH3B and one of IDH3G) requires the assembly and cooperative function of both heterodimers. This Rattus norvegicus (Rat) protein is Probable isocitrate dehydrogenase [NAD] gamma 2, mitochondrial.